The following is a 558-amino-acid chain: Factor VII-activating protease (558 aa).

Positions 1 to 23 (MSVVMLVFRVLLLIALVGNSAIG) are cleaved as a signal peptide. 3 EGF-like domains span residues 71–107 (DDDP…SRCQ), 109–146 (VQNK…PDCS), and 148–186 (VLPV…RFCE). Intrachain disulfides connect Cys-75–Cys-86, Cys-80–Cys-95, Cys-97–Cys-106, Cys-113–Cys-123, Cys-118–Cys-134, Cys-136–Cys-145, Cys-152–Cys-163, Cys-157–Cys-174, Cys-176–Cys-185, Cys-192–Cys-274, Cys-213–Cys-255, Cys-244–Cys-269, Cys-299–Cys-433, Cys-345–Cys-361, Cys-353–Cys-422, Cys-445–Cys-513, Cys-475–Cys-491, and Cys-503–Cys-531. The 84-residue stretch at 191 to 274 (DCYVGDGYSY…KWEYCNVEVC (84 aa)) folds into the Kringle domain. One can recognise a Peptidase S1 domain in the interval 312 to 553 (IYGGFKSTAG…FLNWIKTTMH (242 aa)). Active-site charge relay system residues include His-360 and Asp-409. Catalysis depends on Ser-507, which acts as the Charge relay system.

This sequence belongs to the peptidase S1 family. As to quaternary structure, heterodimer; disulfide-linked. Heterodimer of a 50 kDa heavy and a 27 kDa light chain linked by a disulfide bond. Post-translationally, proteolytic cleavage at Gly-23 or Met-27 can give rise to the 50 kDa heavy chain (HC) and cleavage at Arg-311 or Lys-317 can give rise to the 27 kDa light chain (LC). The HC can undergo further proteolytic cleavage giving rise to a 26 kDa fragment. The LC can undergo further proteolytic cleavage at Arg-311 leading to a 17-kDa fragment and at Arg-478 leading to a 8-kDa fragment.

The protein localises to the secreted. Cleaves the alpha-chain at multiple sites and the beta-chain between 'Lys-53' and 'Lys-54' but not the gamma-chain of fibrinogen and therefore does not initiate the formation of the fibrin clot and does not cause the fibrinolysis directly. It does not cleave (activate) prothrombin and plasminogen but converts the inactive single chain urinary plasminogen activator (pro-urokinase) to the active two chain form. Activates coagulation factor VII. May function as a tumor suppressor negatively regulating cell proliferation and cell migration. The protein is Factor VII-activating protease of Rattus norvegicus (Rat).